Reading from the N-terminus, the 89-residue chain is Small ribosomal subunit protein uS15 (89 aa).

It belongs to the universal ribosomal protein uS15 family. As to quaternary structure, part of the 30S ribosomal subunit. Forms a bridge to the 50S subunit in the 70S ribosome, contacting the 23S rRNA.

Its function is as follows. One of the primary rRNA binding proteins, it binds directly to 16S rRNA where it helps nucleate assembly of the platform of the 30S subunit by binding and bridging several RNA helices of the 16S rRNA. Functionally, forms an intersubunit bridge (bridge B4) with the 23S rRNA of the 50S subunit in the ribosome. The chain is Small ribosomal subunit protein uS15 from Rhizobium johnstonii (strain DSM 114642 / LMG 32736 / 3841) (Rhizobium leguminosarum bv. viciae).